The primary structure comprises 232 residues: Ubiquinone biosynthesis O-methyltransferase (232 aa).

S-adenosyl-L-methionine contacts are provided by Arg-36, Gly-55, Asp-76, and Leu-120.

Belongs to the methyltransferase superfamily. UbiG/COQ3 family.

It carries out the reaction a 3-demethylubiquinol + S-adenosyl-L-methionine = a ubiquinol + S-adenosyl-L-homocysteine + H(+). The catalysed reaction is a 3-(all-trans-polyprenyl)benzene-1,2-diol + S-adenosyl-L-methionine = a 2-methoxy-6-(all-trans-polyprenyl)phenol + S-adenosyl-L-homocysteine + H(+). It functions in the pathway cofactor biosynthesis; ubiquinone biosynthesis. O-methyltransferase that catalyzes the 2 O-methylation steps in the ubiquinone biosynthetic pathway. The polypeptide is Ubiquinone biosynthesis O-methyltransferase (Pseudomonas syringae pv. tomato (strain ATCC BAA-871 / DC3000)).